Here is a 1086-residue protein sequence, read N- to C-terminus: Isoleucine--tRNA ligase (1086 aa).

The 'HIGH' region signature appears at 53–63 (PFANGLPHYGH). The 'KMSKS' region motif lies at 624 to 628 (KLSKR). ATP is bound at residue lysine 627.

It belongs to the class-I aminoacyl-tRNA synthetase family. IleS type 2 subfamily. In terms of assembly, monomer. Requires Zn(2+) as cofactor.

It is found in the cytoplasm. The catalysed reaction is tRNA(Ile) + L-isoleucine + ATP = L-isoleucyl-tRNA(Ile) + AMP + diphosphate. Its function is as follows. Catalyzes the attachment of isoleucine to tRNA(Ile). As IleRS can inadvertently accommodate and process structurally similar amino acids such as valine, to avoid such errors it has two additional distinct tRNA(Ile)-dependent editing activities. One activity is designated as 'pretransfer' editing and involves the hydrolysis of activated Val-AMP. The other activity is designated 'posttransfer' editing and involves deacylation of mischarged Val-tRNA(Ile). The chain is Isoleucine--tRNA ligase from Rickettsia typhi (strain ATCC VR-144 / Wilmington).